A 344-amino-acid chain; its full sequence is C5a anaphylatoxin chemotactic receptor 2 (344 aa).

Residues 1–44 (MMNHTTSEYYDYEYDHEHYSDLPDVPVDCPAGTCFTSDVYLIVL) are Extracellular-facing. Asn-3 carries N-linked (GlcNAc...) asparagine glycosylation. A helical transmembrane segment spans residues 45–67 (LVLYAAVFLVGVPGNTLVAWVTW). The Cytoplasmic portion of the chain corresponds to 68 to 78 (KESRHRLGASW). A helical membrane pass occupies residues 79–101 (FLHLTMADLLCCVSLPFLAVPIA). At 102 to 120 (QKGHWPYGAAGCWLLSSIT) the chain is on the extracellular side. Cys-113 and Cys-192 are disulfide-bonded. A helical membrane pass occupies residues 121 to 143 (ILSMYASVLLLTGLSGDLFLLAF). Residues 144–155 (RPSWKGADHRTF) lie on the Cytoplasmic side of the membrane. Residues 156-178 (GVRVVQASSWMLGLLLTVPSAVY) traverse the membrane as a helical segment. Residues 179-208 (RRLLQEHYPPRLVCGIDYGGSVSAEVAITT) lie on the Extracellular side of the membrane. A helical transmembrane segment spans residues 209-231 (VRFLFGFLGPLVFMAGCHGILQR). The Cytoplasmic portion of the chain corresponds to 232 to 243 (QMARRHWPLGTA). A helical transmembrane segment spans residues 244–266 (VVVGFFICWTPYHVLRVIIAAAP). Residues 267 to 280 (PHSLLLARVLEAEP) lie on the Extracellular side of the membrane. The chain crosses the membrane as a helical span at residues 281–300 (LFNGLALAHSALNPIMFLYF). The Cytoplasmic portion of the chain corresponds to 301–344 (GRKQLCKSLQAACHWALRDPQDEESAVTKVSISTSHEMVSEMPV). Ser-325 bears the Phosphoserine mark.

It belongs to the G-protein coupled receptor 1 family. Interacts with C3 (the anaphylatoxin peptide C3a and the adipogenic hormone ASP); the interaction occurs with higher affinity for ASP, enhancing the phosphorylation and activation of GPR77, recruitment of ARRB2 to the cell surface and endocytosis of GRP77. As to expression, highly expressed in liver and spleen. Lower levels in intestine, brain and kidney. Also expressed in adipose tissues with highest levels in gonadal and ingual fat depots. Lower levels in brown tissue.

It is found in the cell membrane. Its function is as follows. Receptor for the chemotactic and inflammatory C3a, C4a and C5a anaphylatoxin peptides and also for their dearginated forms ASP/C3adesArg, C4adesArg and C5adesArg respectively. Couples weakly to G(i)-mediated signaling pathways. The sequence is that of C5a anaphylatoxin chemotactic receptor 2 (C5ar2) from Mus musculus (Mouse).